The chain runs to 166 residues: MRLILLSGLLLLGTFLANGHDTDPEGQMLNSVIESVMILQREFANLKHAFLTVHKARSFGSGSERLYVSNKEIGKFEALKEICDQAGGHIPSPQFENQNKAFANVLERHNKEAYLVVDDPANFTNWAAGQPNEADGTCVKADTHGSWHSASCDDNLLVVCEFYFIL.

The first 19 residues, 1–19 (MRLILLSGLLLLGTFLANG), serve as a signal peptide directing secretion. Positions 46 to 161 (LKHAFLTVHK…CDDNLLVVCE (116 aa)) constitute a C-type lectin domain. Intrachain disulfides connect C83/C160 and C138/C152. The N-linked (GlcNAc...) asparagine glycan is linked to N122.

Belongs to the alpha-type phospholipase A2 inhibitor family. As to quaternary structure, homotrimer; non-covalently linked. As to expression, expressed by the liver.

The protein localises to the secreted. Its function is as follows. This phospholipase A2 inhibitor binds directly phospholipase A2 in the presence or absence of calcium. The sequence is that of Phospholipase A2 inhibitor clone 02/03/06/07 from Lachesis muta muta (Bushmaster).